The chain runs to 539 residues: Chaperonin GroEL (539 aa).

Residues 29–32 (TIGP), 86–90 (DGTTT), glycine 414, and aspartate 493 each bind ATP.

It belongs to the chaperonin (HSP60) family. Forms a cylinder of 14 subunits composed of two heptameric rings stacked back-to-back. Interacts with the co-chaperonin GroES.

Its subcellular location is the cytoplasm. It catalyses the reaction ATP + H2O + a folded polypeptide = ADP + phosphate + an unfolded polypeptide.. Together with its co-chaperonin GroES, plays an essential role in assisting protein folding. The GroEL-GroES system forms a nano-cage that allows encapsulation of the non-native substrate proteins and provides a physical environment optimized to promote and accelerate protein folding. The sequence is that of Chaperonin GroEL from Staphylococcus aureus.